Here is a 146-residue protein sequence, read N- to C-terminus: UPF0178 protein R01393 (146 aa).

The protein belongs to the UPF0178 family.

The polypeptide is UPF0178 protein R01393 (Rhizobium meliloti (strain 1021) (Ensifer meliloti)).